We begin with the raw amino-acid sequence, 170 residues long: Odorant-binding protein 2a (170 aa).

Positions 1–15 (MKTLFLGVTLGLAAA) are cleaved as a signal peptide. Cysteines 74 and 166 form a disulfide.

Belongs to the calycin superfamily. Lipocalin family. Monomer. In terms of tissue distribution, strongly expressed in the nasal structures, salivary and lachrymal glands, and lung. Expressed in the liver.

It localises to the secreted. Binds and transports small hydrophobic volatile molecules with a higher affinity for aldehydes and large fatty acids, including undecanal, palmitic acid, efficient aldehydes, benzenic aldehydes, heterocyclic aldehydes and aliphatic acids. The sequence is that of Odorant-binding protein 2a (OBP2A) from Homo sapiens (Human).